Here is a 598-residue protein sequence, read N- to C-terminus: Elongation factor 4 (598 aa).

The tr-type G domain maps to 5–187 (ANIRNFSIIA…ALVEFIPAPT (183 aa)). Residues 17-22 (DHGKST) and 134-137 (NKID) each bind GTP.

Belongs to the TRAFAC class translation factor GTPase superfamily. Classic translation factor GTPase family. LepA subfamily.

It is found in the cell inner membrane. It carries out the reaction GTP + H2O = GDP + phosphate + H(+). Its function is as follows. Required for accurate and efficient protein synthesis under certain stress conditions. May act as a fidelity factor of the translation reaction, by catalyzing a one-codon backward translocation of tRNAs on improperly translocated ribosomes. Back-translocation proceeds from a post-translocation (POST) complex to a pre-translocation (PRE) complex, thus giving elongation factor G a second chance to translocate the tRNAs correctly. Binds to ribosomes in a GTP-dependent manner. In Psychrobacter arcticus (strain DSM 17307 / VKM B-2377 / 273-4), this protein is Elongation factor 4.